A 360-amino-acid chain; its full sequence is DAZ-associated protein 1 (360 aa).

RRM domains follow at residues 10–97 and 114–191; these read GKLF…RSRP and NKIF…RAEP. Disordered stretches follow at residues 73–116 and 184–345; these read HTLD…SNKI and VEVK…DFPF. 2 stretches are compositionally biased toward basic and acidic residues: residues 91-112 and 184-195; these read QPER…ENSR and VEVKRAEPRDSK. Polar residues predominate over residues 203-231; it reads GSNQWGSRAMQSTANGWTGQPPQTWQGYS. A compositionally biased stretch (gly residues) spans 242 to 253; the sequence is TIGGYGQPAGRG. Residues 271 to 301 are compositionally biased toward pro residues; the sequence is GPFPPPQGFPPGYATPPPFGYGYGPPPPPPD. The span at 328-345 shows a compositional bias: polar residues; sequence QSAQDLSKPPSGQQDFPF.

Component of a mRNP complex, at least composed of DAZAP1, IGF2BP3-A, STAU and VgRBP60. Binds to the 3'-UTR of Vg1 mRNA. Interacts with profilin, a protein involved in actin assembly. Interacts with VgRBP71. Expressed in oocytes.

The protein localises to the cytoplasm. Functionally, RNA-binding protein, which is required during gametogenesis. May be involved in the actin-dependent anchoring of Vg1 mRNA in the vegetal cortex of the oocyte. This Xenopus laevis (African clawed frog) protein is DAZ-associated protein 1 (dazap1).